The sequence spans 97 residues: Integration host factor subunit alpha (97 aa).

It belongs to the bacterial histone-like protein family. As to quaternary structure, heterodimer of an alpha and a beta chain.

Its function is as follows. This protein is one of the two subunits of integration host factor, a specific DNA-binding protein that functions in genetic recombination as well as in transcriptional and translational control. The protein is Integration host factor subunit alpha of Acinetobacter baylyi (strain ATCC 33305 / BD413 / ADP1).